The sequence spans 218 residues: Guanylate kinase (218 aa).

In terms of domain architecture, Guanylate kinase-like spans 14–193; sequence GVMLVLSSPS…AFASVRAIVS (180 aa). Residue 21-28 coordinates ATP; the sequence is SPSGAGKS.

It belongs to the guanylate kinase family.

It localises to the cytoplasm. The enzyme catalyses GMP + ATP = GDP + ADP. Its function is as follows. Essential for recycling GMP and indirectly, cGMP. The polypeptide is Guanylate kinase (Chelativorans sp. (strain BNC1)).